The sequence spans 64 residues: Large ribosomal subunit protein bL28 (64 aa).

The protein belongs to the bacterial ribosomal protein bL28 family.

The sequence is that of Large ribosomal subunit protein bL28 from Trichlorobacter lovleyi (strain ATCC BAA-1151 / DSM 17278 / SZ) (Geobacter lovleyi).